We begin with the raw amino-acid sequence, 673 residues long: RAS guanyl-releasing protein 4 (673 aa).

Basic residues-rich tracts occupy residues 1–10 (MNRKDIKRKS) and 20–32 (GRGRSRQARRHKT). Disordered regions lie at residues 1 to 34 (MNRKDIKRKSHQECSGKAGGRGRSRQARRHKTCP) and 164 to 188 (LGDASSLLSPGGPGPPPPMSSPGLG). An N-terminal Ras-GEF domain is found at 49–175 (GVLSESSCSE…DASSLLSPGG (127 aa)). Residues 164-173 (LGDASSLLSP) are compositionally biased toward low complexity. The 232-residue stretch at 201-432 (ETEELAQHLT…YELSYAREPR (232 aa)) folds into the Ras-GEF domain. The region spanning 466 to 501 (HVEQLVESVFKNYDPEGRGSISLEDFERLSGNFPFA) is the EF-hand domain. The segment at 540–590 (LHAFQEVTFRKPTFCHSCSGFLWGVTKQGYRCRDCGLCCHRHCRDQVRVEC) adopts a Phorbol-ester/DAG-type zinc-finger fold. Residues 592–633 (KRPETKGDPGPPGAPVPATSLPPANCGSEESLSYTLSPDPES) form a disordered region.

It belongs to the RASGRP family. As to expression, expressed by mast cells and their progenitors (at protein level). Expressed by dendritic cells. In terms of tissue distribution, expressed in neutrophils.

It localises to the cytoplasm. It is found in the cell membrane. Its function is as follows. Functions as a cation- and diacylglycerol (DAG)-regulated nucleotide exchange factor activating Ras through the exchange of bound GDP for GTP. In neutrophils, participates in a phospholipase C-activating N-formyl peptide-activated GPCR (G protein-coupled receptor) signaling pathway by promoting Ras-mediated activation of PIK3CG/PI3Kgamma to promote neutrophil functional responses. In CD117(+) dendritic cells and mast cells, participates in an lipopolysaccharide (LPS)-activated signaling pathway that stimulates the production of interferon-gamma and other pro-inflammatory cytokines by natural killer (NK) cells. May function in mast cell differentiation. Does not appear to be required for the development of B-cells, DC-cells, T-cells, or NK-cells. Binds diacylglycerol (DAG). Functionally, unable to bind diacylglycerol (DAG). This Mus musculus (Mouse) protein is RAS guanyl-releasing protein 4 (Rasgrp4).